The chain runs to 497 residues: Guanosine-5'-triphosphate,3'-diphosphate pyrophosphatase (497 aa).

The protein belongs to the GppA/Ppx family. GppA subfamily.

It carries out the reaction guanosine 3'-diphosphate 5'-triphosphate + H2O = guanosine 3',5'-bis(diphosphate) + phosphate + H(+). It participates in purine metabolism; ppGpp biosynthesis; ppGpp from GTP: step 2/2. Catalyzes the conversion of pppGpp to ppGpp. Guanosine pentaphosphate (pppGpp) is a cytoplasmic signaling molecule which together with ppGpp controls the 'stringent response', an adaptive process that allows bacteria to respond to amino acid starvation, resulting in the coordinated regulation of numerous cellular activities. The sequence is that of Guanosine-5'-triphosphate,3'-diphosphate pyrophosphatase from Pseudoalteromonas translucida (strain TAC 125).